Consider the following 322-residue polypeptide: Adenine deaminase (322 aa).

3 residues coordinate Zn(2+): histidine 11, histidine 13, and histidine 189. The Proton donor role is filled by glutamate 192. A Zn(2+)-binding site is contributed by aspartate 270. Aspartate 271 contributes to the substrate binding site.

This sequence belongs to the metallo-dependent hydrolases superfamily. Adenosine and AMP deaminases family. Adenine deaminase type 2 subfamily. The cofactor is Zn(2+).

The catalysed reaction is adenine + H2O + H(+) = hypoxanthine + NH4(+). Catalyzes the hydrolytic deamination of adenine to hypoxanthine. Plays an important role in the purine salvage pathway and in nitrogen catabolism. The chain is Adenine deaminase from Rhizobium rhizogenes (strain K84 / ATCC BAA-868) (Agrobacterium radiobacter).